Reading from the N-terminus, the 290-residue chain is Nucleotide-binding protein Clos_0574 (290 aa).

Residue Gly8–Ser15 coordinates ATP. Position 59 to 62 (Asp59 to Gly62) interacts with GTP.

This sequence belongs to the RapZ-like family.

Its function is as follows. Displays ATPase and GTPase activities. In Alkaliphilus oremlandii (strain OhILAs) (Clostridium oremlandii (strain OhILAs)), this protein is Nucleotide-binding protein Clos_0574.